The following is a 429-amino-acid chain: MMAVASSRTPAVTSFIAPLVAMVGGGQLARMTHQAAIALGQNLRVLVTSADDPAAQVTPNVVIGSHTDLAALRRVAAGADVLTFDHEHVPNELLEKLVADGVNVAPSPQALVHAQDKLVMRQRLAAAGVAVPRYAGIKDPDEIDVFAARVDAPIVVKAVRGGYDGRGVRMARDVADARDFARECLADGVAVLVEERVDLRRELSALVARSPFGQGAAWPVVQTVQRDGTCVLVIAPAPALPDDLATAAQRLALQLADELGVVGVLAVELFETTDGALLVNELAMRPHNSGHWTIDGARTSQFEQHLRAVLDYPLGDSDAVVPVTVMANVLGAAQPPAMSVDERLHHLFARMPDARVHLYGKAERPGRKVGHINFLGSDVAQLCERAELAAHWLSHGRWTDGWDPHRASDDAVGVPPACGGRSDEEERRL.

ATP is bound by residues Lys-117, Lys-157, 194-197, Glu-202, and 280-281; these read EERV and NE. Positions 121 to 310 constitute an ATP-grasp domain; that stretch reads RQRLAAAGVA…QFEQHLRAVL (190 aa). The segment at 406-429 is disordered; sequence RASDDAVGVPPACGGRSDEEERRL.

It belongs to the PurK/PurT family. In terms of assembly, homodimer.

The catalysed reaction is 5-amino-1-(5-phospho-beta-D-ribosyl)imidazole + hydrogencarbonate + ATP = 5-carboxyamino-1-(5-phospho-D-ribosyl)imidazole + ADP + phosphate + 2 H(+). It participates in purine metabolism; IMP biosynthesis via de novo pathway; 5-amino-1-(5-phospho-D-ribosyl)imidazole-4-carboxylate from 5-amino-1-(5-phospho-D-ribosyl)imidazole (N5-CAIR route): step 1/2. Catalyzes the ATP-dependent conversion of 5-aminoimidazole ribonucleotide (AIR) and HCO(3)(-) to N5-carboxyaminoimidazole ribonucleotide (N5-CAIR). This chain is N5-carboxyaminoimidazole ribonucleotide synthase, found in Mycobacterium bovis (strain ATCC BAA-935 / AF2122/97).